Here is a 508-residue protein sequence, read N- to C-terminus: MCKMEKFLYHRKLWEMNVKLLGESKVEKLKNSFVSRPRMSLWMIRAVTVLLLWSCFVHLMALGEMWGPRLFKGWPSCFNHHQLSTAAEMTSLPTKIALPPKRVYVNNGYLMVSCNGGLNQMRAAICDMVTVARYMNVTLIVPELDKTSFWNDPSEFKDIFDVDHFISSLRDEVRILKELPPRLKKRVELGVYHEMPPISWSNMSYYQNQILPLVKKHKVLHLNRTDTRLANNGLPVEVQKLRCRVNFNGLKFTPQIEELGRRVVKILREKGPFLVLHLRYEMDMLAFSGCSHGCNPEEEEELTRMRYAYPWWKEKVINSELKRKDGLCPLTPEETALTLTALGIDRNVQIYIAAGEIYGGQRRMKALTDAFPNVVRKETLLESSDLDFCRNHSSQMAALDYLVALESDIFVPTNDGNMARVVEGHRRFLGFKKTIQLNRRFLVKLIDEYTEGLLSWDVFSSTVKAFHSTRMGSPKRRLVIPNRPKEEDYFYANPQECLQLLDEPLRVI.

The chain crosses the membrane as a helical; Signal-anchor for type II membrane protein span at residues 41 to 63 (LWMIRAVTVLLLWSCFVHLMALG). Residues Asn-136, Asn-202, and Asn-223 are each glycosylated (N-linked (GlcNAc...) asparagine). 277–279 (HLR) contributes to the substrate binding site. A glycan (N-linked (GlcNAc...) asparagine) is linked at Asn-391.

It belongs to the glycosyltransferase GT106 family. In terms of tissue distribution, highly expressed in siliques. Expressed in stems and flowers. Expressed at low levels in roots and rosette leaves.

Its subcellular location is the golgi apparatus membrane. It catalyses the reaction alpha-D-galacturonosyl-[(1-&gt;2)-alpha-L-rhamnosyl-(1-&gt;4)-alpha-D-galacturonosyl](n) + UDP-beta-L-rhamnose = [(1-&gt;2)-alpha-L-rhamnosyl-(1-&gt;4)-alpha-D-galacturonosyl](n+1) + UDP + H(+). It participates in glycan metabolism; pectin biosynthesis. Glycosyltransferase involved in the formation of rhamnogalacturonan I (RG-I) oligosaccharides in the seed coat mucilage, which is a specialized cell wall with abundant RG-I. Transfers the rhamnose residue from UDP-beta-L-rhamnose to RG-I oligosaccharides. Prefers RG-I oligosaccharides with a degree of polymerization of 5 or larger than 5. Does not act on oligosaccharides with a degree of polymerization of 4 or smaller than 4. Does not require metal ions for its activity. This is Rhamnogalacturonan I rhamnosyltransferase 1 from Arabidopsis thaliana (Mouse-ear cress).